Reading from the N-terminus, the 139-residue chain is Protein PsiE homolog (139 aa).

Helical transmembrane passes span 20 to 40, 60 to 80, 85 to 105, and 111 to 131; these read IVLC…LVKI, AEQA…VQYF, HFPL…LIIV, and VDTI…CLVL.

Belongs to the PsiE family.

It localises to the cell inner membrane. The protein is Protein PsiE homolog of Haemophilus influenzae (strain 86-028NP).